Here is a 565-residue protein sequence, read N- to C-terminus: Adenine deaminase 1 (565 aa).

This sequence belongs to the metallo-dependent hydrolases superfamily. Adenine deaminase family. Mn(2+) serves as cofactor.

It carries out the reaction adenine + H2O + H(+) = hypoxanthine + NH4(+). This chain is Adenine deaminase 1, found in Rhizobium etli (strain ATCC 51251 / DSM 11541 / JCM 21823 / NBRC 15573 / CFN 42).